Here is a 168-residue protein sequence, read N- to C-terminus: UPF0262 protein BBta_0898 (168 aa).

The protein belongs to the UPF0262 family.

The sequence is that of UPF0262 protein BBta_0898 from Bradyrhizobium sp. (strain BTAi1 / ATCC BAA-1182).